The primary structure comprises 873 residues: uncharacterized protein (873 aa).

Disordered stretches follow at residues 1–24, 175–251, 375–423, 506–540, 568–592, 662–773, and 822–855; these read MSNK…SMSK, SSAV…TSIS, PSRH…AKKP, DSES…ATRS, DQSS…APEY, ANDS…TSQI, and ANPY…EEPI. The span at 211–225 shows a compositional bias: basic and acidic residues; sequence KDSDRSQTKNTHEET. Over residues 376–385 the composition is skewed to basic residues; it reads SRHHSHRKKE. Residues 574–586 show a composition bias toward basic residues; the sequence is PGRHFGKTGRSHF. The segment covering 665 to 686 has biased composition (low complexity); that stretch reads SPNSSESLESLNNQSYSSSPYS. The span at 698–740 shows a compositional bias: polar residues; it reads QSLNDSPQTSDFKASNLNDSSSNVHSIFQTRETTSPSVQNKTP. Residues 743-755 are compositionally biased toward basic and acidic residues; sequence YHRELKSSKDGHE. The span at 758 to 773 shows a compositional bias: low complexity; the sequence is SPLVSSSPSGSFTSQI. Residues 823–855 show a composition bias toward polar residues; that stretch reads NPYSTNNDGNPSNNTSDVEVNETSMNDNSEEPI.

The protein localises to the cytoplasm. It is found in the vacuole membrane. This is an uncharacterized protein from Schizosaccharomyces pombe (strain 972 / ATCC 24843) (Fission yeast).